We begin with the raw amino-acid sequence, 693 residues long: MEANKRQIVEVDGIKSYFFPHLAHYLASNDELLVNNIAQANKLAAFVLGATDKRPSNEEIAEMILPNDSSAYVLAAGMDVCLILGDDFRPKFDSGAEKLSQLGQAHDLAPIIDDEKKISMLARKTKLKKSNDAKILQVLLKVLGAEEAEEKFVELSELSSALDLDFDVYVLAKLLGFASEELQEEIEIIRDNVTDAFEACKPLLKKLMIEGPKIDSVDPFTQLLLTPQEESIEKAVSHIVARFEEASAVEDDESLVLKSQLGYQLIFLVVRSLADGKRDASRTIQSLMPSSVRAEVFPGLQRSVFKSAVFLASHIIQVFLGSMKSFEDWAFVGLAEDLESTWRRRAIAELLKKFRISVLEQCFSQPIPLLPQSELNNETVIENVNNALQFALWITEFYGSESEKKSLNQLQFLSPKSKNLLVDSFKKFAQGLDSKDHVNRIIESLEKSSSSEPSATAKQTTTSNGPTTVSTAAQVVTVEKMPFSRQTIPCEGTDLANVLNSAKIIGESVTVAAHDVIPEKLNAEKNDNTPSTASPVQFSSDGWDSPTKSVALPPKISTLEEEQEEDTTITKVSPQPQERTGTAWGSGDATPVPLATPVNEYKVSGFGAAPVASGFGQFASSNGTSGRGSYGGGRGGDRGGRGAYGGDRGRGGSGDGSRGYRGGDRGGRGSYGEGSRGYQGGRAGFFGGSRGGS.

Residues 205–447 (KKLMIEGPKI…VNRIIESLEK (243 aa)) are involved in dimerization. His437 serves as the catalytic Proton acceptor. 3 disordered regions span residues 445-468 (LEKS…GPTT), 523-591 (AEKN…DATP), and 620-693 (SSNG…RGGS). Over residues 447–468 (KSSSSEPSATAKQTTTSNGPTT) the composition is skewed to low complexity. Polar residues-rich tracts occupy residues 528–548 (NTPS…SPTK) and 569–580 (ITKVSPQPQERT). Positions 581–614 (GTAWGSGDATPVPLATPVNEYKVSGFGAAPVASG) are required for interaction with sepa-1. 3 stretches are compositionally biased toward gly residues: residues 625–634 (SGRGSYGGGR), 641–660 (RGAY…SRGY), and 668–693 (RGSY…RGGS). An RNA-binding RGG-box region spans residues 633-693 (GRGGDRGGRG…GFFGGSRGGS (61 aa)).

May form a homodimer. Interacts with pgl-1 and pgl-2; this association is not required for P-granule localization of either pgl-1 or pgl-2. Interacts with sepa-1; the interaction is enhanced in the presence of RNA. Interacts with prmt-1; the interaction is direct. Post-translationally, methylated at arginine residues in the RNA-binding RGG-box by prmt-1. Methylation promotes P-granule degradation by autophagy. As to expression, highly expressed in the germline. Expressed in most somatic cells.

It localises to the cytoplasmic granule. It catalyses the reaction [RNA] containing guanosine + H2O = an [RNA fragment]-3'-guanosine-3'-phosphate + a 5'-hydroxy-ribonucleotide-3'-[RNA fragment].. Functionally, guanyl-specific endoribonuclease which cleaves the phosphodiester bond in single-stranded RNA between the 3'-guanylic residue and the 5'-OH residue of adjacent nucleotide, resulting in the formation of a corresponding 2',3'-cyclic phosphate intermediate. P-granule component involved in germline development. Together with the P-granule component pgl-1, is involved in the formation of P-granules. Together with pgl-1, probably recruits other granule components such as pos-1, mex-3 and glh-1, and RNA to P-granules. In vitro, binds mRNA; this interaction is required for the formation of liquid-like droplets that resemble P-granules. Most likely recruits pgl-1 into P-granules during autophagy. Associates with adapters such as sepa-1 and is required for the accumulation and degradation of P-granules by autophagy in somatic cells. This ensures exclusive localization of the P-granules in germ cells. In addition, may act redundantly with pgl-1 to protect germ cells from excessive germline apoptosis during normal oogenesis and development of the two gonadal arms. This may in part be through regulating the localization of sir-2.1 which is involved in germ cell apoptosis. May protect somatic cells from excessive apoptosis during normal development. The polypeptide is Guanyl-specific ribonuclease pgl-3 (Caenorhabditis elegans).